Here is a 214-residue protein sequence, read N- to C-terminus: Cell division protein B1 (214 aa).

In terms of biological role, part of a cell division machinery. The protein is Cell division protein B1 of Sulfolobus acidocaldarius (strain ATCC 33909 / DSM 639 / JCM 8929 / NBRC 15157 / NCIMB 11770).